The chain runs to 455 residues: Ribulose bisphosphate carboxylase large chain (455 aa).

K5 bears the N6,N6,N6-trimethyllysine mark. Positions 114 and 164 each coordinate substrate. K166 acts as the Proton acceptor in catalysis. Residue K168 coordinates substrate. Mg(2+)-binding residues include K192, D194, and E195. K192 carries the N6-carboxylysine modification. H285 serves as the catalytic Proton acceptor. Residues R286, H318, and S370 each contribute to the substrate site.

The protein belongs to the RuBisCO large chain family. Type I subfamily. Heterohexadecamer of 8 large chains and 8 small chains; disulfide-linked. The disulfide link is formed within the large subunit homodimers. Mg(2+) serves as cofactor. Post-translationally, the disulfide bond which can form in the large chain dimeric partners within the hexadecamer appears to be associated with oxidative stress and protein turnover.

It is found in the plastid. It localises to the chloroplast. The catalysed reaction is 2 (2R)-3-phosphoglycerate + 2 H(+) = D-ribulose 1,5-bisphosphate + CO2 + H2O. The enzyme catalyses D-ribulose 1,5-bisphosphate + O2 = 2-phosphoglycolate + (2R)-3-phosphoglycerate + 2 H(+). Its function is as follows. RuBisCO catalyzes two reactions: the carboxylation of D-ribulose 1,5-bisphosphate, the primary event in carbon dioxide fixation, as well as the oxidative fragmentation of the pentose substrate in the photorespiration process. Both reactions occur simultaneously and in competition at the same active site. The protein is Ribulose bisphosphate carboxylase large chain of Lupinus luteus (European yellow lupine).